Reading from the N-terminus, the 168-residue chain is Endoribonuclease YbeY (168 aa).

Residues histidine 127, histidine 131, and histidine 137 each coordinate Zn(2+).

This sequence belongs to the endoribonuclease YbeY family. Zn(2+) is required as a cofactor.

The protein localises to the cytoplasm. Functionally, single strand-specific metallo-endoribonuclease involved in late-stage 70S ribosome quality control and in maturation of the 3' terminus of the 16S rRNA. The polypeptide is Endoribonuclease YbeY (Chromobacterium violaceum (strain ATCC 12472 / DSM 30191 / JCM 1249 / CCUG 213 / NBRC 12614 / NCIMB 9131 / NCTC 9757 / MK)).